A 173-amino-acid chain; its full sequence is 6,7-dimethyl-8-ribityllumazine synthase (173 aa).

5-amino-6-(D-ribitylamino)uracil contacts are provided by residues Phe-24, 58–60 (ALE), and 82–84 (AVI). 87-88 (ET) serves as a coordination point for (2S)-2-hydroxy-3-oxobutyl phosphate. The active-site Proton donor is the His-90. Asn-115 lines the 5-amino-6-(D-ribitylamino)uracil pocket. Arg-129 lines the (2S)-2-hydroxy-3-oxobutyl phosphate pocket. A disordered region spans residues 150–173 (ALEPEEDDEDDEDEDFDDEEDDGR). Residues 152–173 (EPEEDDEDDEDEDFDDEEDDGR) show a composition bias toward acidic residues.

This sequence belongs to the DMRL synthase family.

It catalyses the reaction (2S)-2-hydroxy-3-oxobutyl phosphate + 5-amino-6-(D-ribitylamino)uracil = 6,7-dimethyl-8-(1-D-ribityl)lumazine + phosphate + 2 H2O + H(+). The protein operates within cofactor biosynthesis; riboflavin biosynthesis; riboflavin from 2-hydroxy-3-oxobutyl phosphate and 5-amino-6-(D-ribitylamino)uracil: step 1/2. Functionally, catalyzes the formation of 6,7-dimethyl-8-ribityllumazine by condensation of 5-amino-6-(D-ribitylamino)uracil with 3,4-dihydroxy-2-butanone 4-phosphate. This is the penultimate step in the biosynthesis of riboflavin. This is 6,7-dimethyl-8-ribityllumazine synthase from Bordetella pertussis (strain Tohama I / ATCC BAA-589 / NCTC 13251).